A 37-amino-acid chain; its full sequence is Cytochrome b6-f complex subunit 5 (37 aa).

A helical transmembrane segment spans residues 5-25 (LLSGIVLGLISITSAGLFVTA).

The protein belongs to the PetG family. As to quaternary structure, the 4 large subunits of the cytochrome b6-f complex are cytochrome b6, subunit IV (17 kDa polypeptide, PetD), cytochrome f and the Rieske protein, while the 4 small subunits are PetG, PetL, PetM and PetN. The complex functions as a dimer.

Its subcellular location is the plastid. It localises to the chloroplast thylakoid membrane. Functionally, component of the cytochrome b6-f complex, which mediates electron transfer between photosystem II (PSII) and photosystem I (PSI), cyclic electron flow around PSI, and state transitions. PetG is required for either the stability or assembly of the cytochrome b6-f complex. The protein is Cytochrome b6-f complex subunit 5 of Psilotum nudum (Whisk fern).